The primary structure comprises 263 residues: N-acetylgalactosamine permease IID component (263 aa).

The PTS EIID domain occupies 3 to 263 (SEISKKDITR…SIVCSAFGIL (261 aa)). Transmembrane regions (helical) follow at residues 61-81 (LEFINTHPNLVGFLMGLLISM), 98-118 (LFGPIAGIGDAIFWFTLLPIM), 131-151 (LLGPILFFAVYLLIFFLRVGW), 178-198 (TILGITVIGGLIASYVHINVV), 215-235 (FFDKVFPNILPMAYTLLMYYF), and 243-263 (PVLLIGVTFVLSIVCSAFGIL).

It localises to the cell inner membrane. Functionally, the phosphoenolpyruvate-dependent sugar phosphotransferase system (PTS), a major carbohydrate active -transport system, catalyzes the phosphorylation of incoming sugar substrates concomitant with their translocation across the cell membrane. This system is involved in N-acetylgalactosamine transport. This Escherichia coli (strain K12) protein is N-acetylgalactosamine permease IID component (agaD).